Reading from the N-terminus, the 604-residue chain is Lipoma-preferred partner homolog (604 aa).

Disordered regions lie at residues 31–96 (TPSI…LDDV) and 129–381 (DLES…AFRP). The segment covering 32 to 41 (PSISVSTQQT) has biased composition (polar residues). 2 stretches are compositionally biased toward low complexity: residues 42–53 (PKKFAPVVAPKP) and 143–161 (GSGT…TPVT). Residues 207-226 (SYTTASTPSRPTFNVQVRTA) are compositionally biased toward polar residues. Positions 365 to 377 (SGYPSSGPTSSTP) are enriched in low complexity. LIM zinc-binding domains are found at residues 406 to 465 (GRCA…INTL), 466 to 526 (EQCS…KFAP), and 527 to 595 (RCSV…RIQA).

It belongs to the zyxin/ajuba family.

The protein resides in the nucleus. The protein localises to the cytoplasm. It localises to the cell junction. May play a structural role at sites of cell adhesion in maintaining cell shape and motility. May be involved in signal transduction from cell adhesion sites to the nucleus. This Gallus gallus (Chicken) protein is Lipoma-preferred partner homolog (LPP).